The primary structure comprises 284 residues: RNase adapter protein RapZ (284 aa).

ATP is bound at residue 8-15 (GRSGSGKS). 56 to 59 (DVRN) is a GTP binding site. An RNA-binding region spans residues 266–284 (RSRGKNVQSRHRTLEKRRS).

This sequence belongs to the RapZ-like family. RapZ subfamily. As to quaternary structure, homotrimer.

Functionally, modulates the synthesis of GlmS, by affecting the processing and stability of the regulatory small RNA GlmZ. When glucosamine-6-phosphate (GlcN6P) concentrations are high in the cell, RapZ binds GlmZ and targets it to cleavage by RNase E. Consequently, GlmZ is inactivated and unable to activate GlmS synthesis. Under low GlcN6P concentrations, RapZ is sequestered and inactivated by an other regulatory small RNA, GlmY, preventing GlmZ degradation and leading to synthesis of GlmS. The protein is RNase adapter protein RapZ of Erwinia tasmaniensis (strain DSM 17950 / CFBP 7177 / CIP 109463 / NCPPB 4357 / Et1/99).